A 469-amino-acid chain; its full sequence is Ribulose bisphosphate carboxylase large chain (469 aa).

The propeptide occupies 1-2; it reads MS. Pro3 bears the N-acetylproline mark. At Lys14 the chain carries N6,N6,N6-trimethyllysine. 2 residues coordinate substrate: Asn123 and Thr173. Catalysis depends on Lys175, which acts as the Proton acceptor. Residue Lys177 coordinates substrate. Residues Lys201, Asp203, and Glu204 each contribute to the Mg(2+) site. An N6-carboxylysine modification is found at Lys201. The Proton acceptor role is filled by His294. Residues Arg295, His327, and Ser379 each coordinate substrate.

The protein belongs to the RuBisCO large chain family. Type I subfamily. As to quaternary structure, heterohexadecamer of 8 large chains and 8 small chains; disulfide-linked. The disulfide link is formed within the large subunit homodimers. Mg(2+) is required as a cofactor. In terms of processing, the disulfide bond which can form in the large chain dimeric partners within the hexadecamer appears to be associated with oxidative stress and protein turnover.

The protein resides in the plastid. It localises to the chloroplast. The catalysed reaction is 2 (2R)-3-phosphoglycerate + 2 H(+) = D-ribulose 1,5-bisphosphate + CO2 + H2O. It carries out the reaction D-ribulose 1,5-bisphosphate + O2 = 2-phosphoglycolate + (2R)-3-phosphoglycerate + 2 H(+). In terms of biological role, ruBisCO catalyzes two reactions: the carboxylation of D-ribulose 1,5-bisphosphate, the primary event in carbon dioxide fixation, as well as the oxidative fragmentation of the pentose substrate in the photorespiration process. Both reactions occur simultaneously and in competition at the same active site. The sequence is that of Ribulose bisphosphate carboxylase large chain from Brexia madagascariensis.